Consider the following 396-residue polypeptide: Phosphoglycerate kinase (396 aa).

Substrate contacts are provided by residues 23-25 (DFN), R38, 61-64 (HMGK), R122, and R155. Residues K206, G296, E327, and 353–356 (GGDS) each bind ATP.

This sequence belongs to the phosphoglycerate kinase family. In terms of assembly, monomer.

It is found in the cytoplasm. The catalysed reaction is (2R)-3-phosphoglycerate + ATP = (2R)-3-phospho-glyceroyl phosphate + ADP. The protein operates within carbohydrate degradation; glycolysis; pyruvate from D-glyceraldehyde 3-phosphate: step 2/5. The protein is Phosphoglycerate kinase of Clostridium botulinum (strain Eklund 17B / Type B).